Consider the following 308-residue polypeptide: Oxygen-dependent coproporphyrinogen-III oxidase (308 aa).

Residue S100 coordinates substrate. 2 residues coordinate a divalent metal cation: H104 and H114. H114 acts as the Proton donor in catalysis. 116 to 118 (NFR) is a substrate binding site. H153 and H183 together coordinate a divalent metal cation. The tract at residues 248-283 (YVEFNLVFDRGTIFGLQSGGRTESILSSMPPMASWR) is important for dimerization. 266–268 (GGR) serves as a coordination point for substrate.

Belongs to the aerobic coproporphyrinogen-III oxidase family. Homodimer. A divalent metal cation serves as cofactor.

It is found in the cytoplasm. The enzyme catalyses coproporphyrinogen III + O2 + 2 H(+) = protoporphyrinogen IX + 2 CO2 + 2 H2O. It functions in the pathway porphyrin-containing compound metabolism; protoporphyrin-IX biosynthesis; protoporphyrinogen-IX from coproporphyrinogen-III (O2 route): step 1/1. Involved in the heme biosynthesis. Catalyzes the aerobic oxidative decarboxylation of propionate groups of rings A and B of coproporphyrinogen-III to yield the vinyl groups in protoporphyrinogen-IX. The chain is Oxygen-dependent coproporphyrinogen-III oxidase from Francisella tularensis subsp. novicida (strain U112).